A 246-amino-acid chain; its full sequence is Flagellar brake protein YcgR (246 aa).

A PilZ domain is found at 128 to 232; the sequence is KRAHFRAYVG…QAERQLLQAI (105 aa).

It belongs to the YcgR family. In terms of assembly, monomer. Interacts with the flagellar basal bodies.

It is found in the bacterial flagellum basal body. Functionally, acts as a flagellar brake, regulating swimming and swarming in a bis-(3'-5') cyclic diguanylic acid (c-di-GMP)-dependent manner. Binds 1 c-di-GMP dimer per subunit. Increasing levels of c-di-GMP lead to decreased motility. The chain is Flagellar brake protein YcgR from Thioalkalivibrio sulfidiphilus (strain HL-EbGR7).